A 179-amino-acid chain; its full sequence is Probable DNA-directed RNA polymerase subunit delta (179 aa).

Residues 14–81 (MSLVELAYEI…GDQRWGLRSW (68 aa)) enclose the HTH HARE-type domain. The interval 108–179 (VVEEDFDEIE…DDLDDNEEEK (72 aa)) is disordered. Residues 109-179 (VEEDFDEIEE…DDLDDNEEEK (71 aa)) show a composition bias toward acidic residues.

Belongs to the RpoE family. RNAP is composed of a core of 2 alpha, a beta and a beta' subunits. The core is associated with a delta subunit and one of several sigma factors.

Its function is as follows. Participates in both the initiation and recycling phases of transcription. In the presence of the delta subunit, RNAP displays an increased specificity of transcription, a decreased affinity for nucleic acids, and an increased efficiency of RNA synthesis because of enhanced recycling. The polypeptide is Probable DNA-directed RNA polymerase subunit delta (Bacillus pumilus (strain SAFR-032)).